A 268-amino-acid chain; its full sequence is Interferon alpha/beta receptor 2 (268 aa).

The N-terminal stretch at 1–16 is a signal peptide; that stretch reads MGPWTLLLLHLPLVVS. Residues 17-223 are Extracellular-facing; that stretch reads MLPAPTNVSI…TSPTAANTVP (207 aa). 2 Fibronectin type-III domains span residues 18-114 and 115-217; these read LPAP…LTDT and LLGP…TSPT. Intrachain disulfides connect Cys65–Cys74 and Cys191–Cys211. The chain crosses the membrane as a helical span at residues 224–244; the sequence is VVLSVLCAFSLLVVLLCGIVV. The Cytoplasmic segment spans residues 245–268; it reads YSGRLLCMHKPLPKTLSSVPLCGG.

Belongs to the type II cytokine receptor family. In terms of assembly, heterodimer with IFNAR1; forming the receptor for type I interferon.

It is found in the cell membrane. The protein localises to the cytoplasm. Its function is as follows. Together with IFNAR1, forms the heterodimeric receptor for type I interferons (including interferons alpha, beta, epsilon, omega and kappa). Type I interferon binding activates the JAK-STAT signaling cascade, resulting in transcriptional activation or repression of interferon-regulated genes that encode the effectors of the interferon response. Mechanistically, type I interferon-binding brings the IFNAR1 and IFNAR2 subunits into close proximity with one another, driving their associated Janus kinases (JAKs) (TYK2 bound to IFNAR1 and JAK1 bound to IFNAR2) to cross-phosphorylate one another. The activated kinases phosphorylate specific tyrosine residues on the intracellular domains of IFNAR1 and IFNAR2, forming docking sites for the STAT transcription factors (STAT1, STAT2 and STAT). STAT proteins are then phosphorylated by the JAKs, promoting their translocation into the nucleus to regulate expression of interferon-regulated genes. The protein is Interferon alpha/beta receptor 2 of Oncorhynchus mykiss (Rainbow trout).